The following is a 324-amino-acid chain: Leucine carboxyl methyltransferase 1 (324 aa).

Residues Arg-74, Gly-101, Asp-128, 172–173, and Glu-196 each bind S-adenosyl-L-methionine; that span reads DL.

The protein belongs to the methyltransferase superfamily. LCMT family.

The catalysed reaction is [phosphatase 2A protein]-C-terminal L-leucine + S-adenosyl-L-methionine = [phosphatase 2A protein]-C-terminal L-leucine methyl ester + S-adenosyl-L-homocysteine. Methylates the carboxyl group of the C-terminal leucine residue of protein phosphatase 2A catalytic subunits to form alpha-leucine ester residues. The protein is Leucine carboxyl methyltransferase 1 (PPM1) of Yarrowia lipolytica (strain CLIB 122 / E 150) (Yeast).